A 118-amino-acid polypeptide reads, in one-letter code: Large ribosomal subunit protein uL24 (118 aa).

This sequence belongs to the universal ribosomal protein uL24 family. Part of the 50S ribosomal subunit.

In terms of biological role, one of two assembly initiator proteins, it binds directly to the 5'-end of the 23S rRNA, where it nucleates assembly of the 50S subunit. Functionally, one of the proteins that surrounds the polypeptide exit tunnel on the outside of the subunit. The polypeptide is Large ribosomal subunit protein uL24 (Prochlorococcus marinus (strain MIT 9313)).